A 524-amino-acid polypeptide reads, in one-letter code: Tyrosine-protein kinase HCK (524 aa).

Residues 1-72 (MGGRSSCEDP…NNSNSMPPGF (72 aa)) form a disordered region. Glycine 2 is lipidated: N-myristoyl glycine. The S-palmitoyl cysteine moiety is linked to residue glycine 3. Residues 29 to 38 (FLRDGSKASK) show a composition bias toward basic and acidic residues. The residue at position 50 (tyrosine 50) is a Phosphotyrosine; by autocatalysis. The span at 54–68 (PTSSSKLGPNNSNSM) shows a compositional bias: polar residues. Residues 76 to 136 (SEDTIVVALY…PSNYVARVNS (61 aa)) form the SH3 domain. Residues 142-239 (WFFKGISRKD…GLCQKLSVPC (98 aa)) form the SH2 domain. Position 200 is a phosphothreonine (threonine 200). Tyrosine 207 bears the Phosphotyrosine mark. The Protein kinase domain occupies 260 to 513 (LQMEKKLGAG…YIQSVLDDFY (254 aa)). Residues 266–274 (LGAGQFGEV) and lysine 288 each bind ATP. Aspartate 379 acts as the Proton acceptor in catalysis. At tyrosine 409 the chain carries Phosphotyrosine; by autocatalysis. Serine 460 is subject to Phosphoserine. Residue tyrosine 520 is modified to Phosphotyrosine.

It belongs to the protein kinase superfamily. Tyr protein kinase family. SRC subfamily. As to quaternary structure, interacts with ADAM15. Interacts with FASLG. Interacts with ARRB1 and ARRB2. Interacts with FCGR1A; the interaction may be indirect. Interacts with IL6ST. Interacts (via SH3 domain) with ELMO1. Interacts (via SH3 domain) with TP73. Interacts with YAP1. Interacts with ABL1 and ITGB1, and thereby recruits ABL1 to activated ITGB1. Interacts (via SH2 domain) with FLT3 (tyrosine phosphorylated). Interacts with CBL. Interacts with VAV1, WAS and RAPGEF1. Interacts (via SH3 domain) with WDCP. In terms of processing, phosphorylated on several tyrosine residues. Autophosphorylated. Becomes rapidly phosphorylated upon activation of the immunoglobulin receptors FCGR1A and FCGR2A. Phosphorylation at Tyr-409 increases kinase activity. Phosphorylation at Tyr-520 inhibits kinase activity. Kinase activity is not required for phosphorylation at Tyr-520, suggesting that this site may be a target of other kinases. Post-translationally, ubiquitinated by CBL, leading to its degradation via the proteasome. Isoform 2 palmitoylation at position 2 requires prior myristoylation. Palmitoylation at position 3 is required for caveolar localization of isoform 2. In terms of tissue distribution, expressed predominantly in cells of the myeloid and B-lymphoid lineages.

Its subcellular location is the cytoplasmic vesicle. The protein resides in the secretory vesicle. It is found in the cytoplasm. The protein localises to the cytosol. It localises to the membrane. Its subcellular location is the caveola. The protein resides in the lysosome. It is found in the cell projection. The protein localises to the podosome membrane. It localises to the cell membrane. Its subcellular location is the cell junction. The protein resides in the focal adhesion. It is found in the cytoskeleton. The protein localises to the golgi apparatus. It localises to the nucleus. It catalyses the reaction L-tyrosyl-[protein] + ATP = O-phospho-L-tyrosyl-[protein] + ADP + H(+). With respect to regulation, subject to autoinhibition, mediated by intramolecular interactions involving the SH2 and SH3 domains. Kinase activity is also regulated by phosphorylation at regulatory tyrosine residues. Phosphorylation at Tyr-409 is required for optimal activity. Phosphorylation at Tyr-520 inhibits kinase activity. Inhibited by PP1. Functionally, non-receptor tyrosine-protein kinase found in hematopoietic cells that transmits signals from cell surface receptors and plays an important role in the regulation of innate immune responses, including neutrophil, monocyte, macrophage and mast cell functions, phagocytosis, cell survival and proliferation, cell adhesion and migration. Acts downstream of receptors that bind the Fc region of immunoglobulins, such as FCGR1A and FCGR2A, but also CSF3R, PLAUR, the receptors for IFNG, IL2, IL6 and IL8, and integrins, such as ITGB1 and ITGB2. During the phagocytic process, mediates mobilization of secretory lysosomes, degranulation, and activation of NADPH oxidase to bring about the respiratory burst. Plays a role in the release of inflammatory molecules. Promotes reorganization of the actin cytoskeleton and actin polymerization, formation of podosomes and cell protrusions. Inhibits TP73-mediated transcription activation and TP73-mediated apoptosis. Phosphorylates CBL in response to activation of immunoglobulin gamma Fc region receptors. Phosphorylates ADAM15, BCR, ELMO1, FCGR2A, GAB1, GAB2, RAPGEF1, STAT5B, TP73, VAV1 and WAS. The sequence is that of Tyrosine-protein kinase HCK (Hck) from Mus musculus (Mouse).